The following is a 525-amino-acid chain: MTANIHNHRILILDFGSQYTQLIARRIREIGVYCELWAWDVTEEQIREFNPNGIILSGGPESTTEDNSPRAPEYVFNAGVPVLGICYGMQTMSMQLGGDVEVSGEREFGYSQVEIRETCELFRDIQDSVSEDGKPLLDVWMSHGDKVTAIPADFVTIASTETCPFAIMANEEKRFYGVQFHPEVTHTHQGLAILKRFVLDICGCDALWTSAAIIEDTVARLKQQIGDDHVILALSGGVDSSVTALLLNRAIGKRLTCVFVDNGLLRLNEAEQVMAMFKGKFDLNIIHVEAEDRFLTALKGENDPEKKRKIIGHTFIEIFDEEAVKLPQVKWLAQGTIYPDVIESAASATGKAHVIKSHHNVGGLPEDMKLGLVEPLKELFKDEVRKIGLELGLPYDMLYRHPFPGPGLGVRVLGEIKKEYCDLLRRADAIFIEELHKADLYNKVSQAFTVFLPVRSVGVMGDGRKYDWVVSLRAVETVDFMTAHWAHLPYDFLGRVSNRIINEVNGISRVVYDISGKPPATIEWE.

The Glutamine amidotransferase type-1 domain maps to 9–207 (RILILDFGSQ…VLDICGCDAL (199 aa)). The active-site Nucleophile is C86. Catalysis depends on residues H181 and E183. A GMPS ATP-PPase domain is found at 208-400 (WTSAAIIEDT…LGLPYDMLYR (193 aa)). 235 to 241 (SGGVDSS) lines the ATP pocket.

Homodimer.

It carries out the reaction XMP + L-glutamine + ATP + H2O = GMP + L-glutamate + AMP + diphosphate + 2 H(+). Its pathway is purine metabolism; GMP biosynthesis; GMP from XMP (L-Gln route): step 1/1. In terms of biological role, catalyzes the synthesis of GMP from XMP. The sequence is that of GMP synthase [glutamine-hydrolyzing] from Proteus mirabilis (strain HI4320).